The following is a 1044-amino-acid chain: MPRRQPPRPLLLLSALLCAPASAFNLDEEKLTVYSGPPGSYFGYSVDFYIPDPSTVSVLVGAPRANTTQPDIVEGGAVYHCGWPAARCRQIPFDNTNNRKIKVNGTREPIEFKTNQWFGATVKAHKEKVVACAPLYHWRTLKDSPEKDPVGTCYVAIQNFSAYAEYSPCRNSNADPEGQGFCQAGFSLDFYKNGDLIVGGPGSFYWQGQVITASIADIITNYSFKDILRKLAHEKQTGVAPPTYDDNYMGYSVAAGEFTGDSEEELVAGVPRGAQNFGYVSIINSSDLTFIQNFTGEQMASYFGYTVAVSDVNNDGLDDILVGAPLFMEREFESKPKEVGQVYLYLQESAFLFRDPQILTGTEVFGRFGSAITHLGDLNQDGYNDIAVGAPFAGEDRRGKVLIYNGYSNGLKTDPSQVLNGAWASQSMPSGFGFTLRGDSDVDKNDYPDLIVGAFGAGKAVVYRARPVVTVNALLILNPMIVNPDNKTCQPPGSPLFVACFTVRVCAAFEGQSISDEIVLKGELQLDSLKQKGAVKRTLFFDYHQSHHYFSIVMERQKKLYCQDFLVYLRDETEFRDKLSPININLNYSLDESHFKDSLLVKPILNYYQRPSVTEQAYILVDCGEDNLCIPDLHLSAVPDKDQLIIGEENCVMLIINPRNDGEGAYEAELHIKIPPEADYTGVERNNKALRVLSCDYKMENETRMVVCDLGNPMVAGANFSTGIRFSVQHFENSDFSINFELQIKSSNKINSTSNLVNLHINITAAAQVQVRGVSHPPQIILPLHNWEPKDEPTKEEEIGPLVEHIYELHNIGPSAINNTVLHVGWPVSSGEEFLLYILHIQTHGPLHCQTSSPINIMQINFAIPQDTPELAAFLYNSTISHYIRRREVAVAEPYRRNSAKILNCTNVKCILISCNVGQLERGKSAALKIRSRLWAETFLQRKNDPYTLSSNVSFKVKNMPYKVQPAKLPEGSIAIRTSVIWSTPNVSFVIPLWVIILAIMLGLLVLAVLTLALWKCGFFDRARPPQDDMADREQLTNNKTTDA.

The signal sequence occupies residues 1-23 (MPRRQPPRPLLLLSALLCAPASA). At 24–991 (FNLDEEKLTV…WSTPNVSFVI (968 aa)) the chain is on the extracellular side. FG-GAP repeat units follow at residues 28 to 90 (EEKL…RCRQ), 104 to 165 (NGTR…AYAE), 170 to 222 (RNSN…ITNY), 236 to 288 (QTGV…SSDL), 289 to 354 (TFIQ…FLFR), 355 to 413 (DPQI…GLKT), and 417 to 480 (QVLN…LNPM). An N-linked (GlcNAc...) asparagine glycan is attached at N66. C81 and C88 form a disulfide bridge. N104 is a glycosylation site (N-linked (GlcNAc...) asparagine). Cysteines 132 and 153 form a disulfide. N159 is a glycosylation site (N-linked (GlcNAc...) asparagine). C169 and C182 are disulfide-bonded. N221 is a glycosylation site (N-linked (GlcNAc...) asparagine). Residues E257, T259, D261, and E265 each coordinate Ca(2+). N-linked (GlcNAc...) asparagine glycans are attached at residues N284 and N293. Positions 311, 313, 315, 317, 319, 377, 379, 381, 383, and 385 each coordinate Ca(2+). The Cell attachment site motif lies at 437-439 (RGD). Residues D441, D443, N445, Y447, and D449 each contribute to the Ca(2+) site. N-linked (GlcNAc...) asparagine glycosylation occurs at N486. 2 disulfide bridges follow: C489–C500 and C506–C562. The N-linked (GlcNAc...) asparagine glycan is linked to N587. 2 disulfide bridges follow: C623-C629 and C695-C708. N701, N719, N751, N762, N818, N877, and N904 each carry an N-linked (GlcNAc...) asparagine glycan. Cystine bridges form between C849/C905 and C910/C915. N-linked (GlcNAc...) asparagine glycans are attached at residues N952 and N986. Residues 992 to 1015 (PLWVIILAIMLGLLVLAVLTLALW) traverse the membrane as a helical segment. Residues 1016 to 1044 (KCGFFDRARPPQDDMADREQLTNNKTTDA) are Cytoplasmic-facing.

The protein belongs to the integrin alpha chain family. Heterodimer of an alpha and a beta subunit. The alpha subunit is composed of a heavy and a light chain linked by a disulfide bond. Alpha-8 associates with beta-1. Prominently expressed on axons and on cells in contact with basal laminae in embryos.

Its subcellular location is the membrane. It localises to the cell membrane. Functionally, integrin alpha-8/beta-1 functions in the genesis of kidney and probably of other organs by regulating the recruitment of mesenchymal cells into epithelial structures. It recognizes the sequence R-G-D in a wide array of ligands including TNC, FN1, SPP1, TGFB1, TGFB3 and VTN. NPNT is probably its functional ligand in kidney genesis. Neuronal receptor for TNC it mediates cell-cell interactions and regulates neurite outgrowth of sensory and motor neurons. This is Integrin alpha-8 (ITGA8) from Gallus gallus (Chicken).